Reading from the N-terminus, the 411-residue chain is 2-oxoglutarate-dependent dioxygenase AOP3 (411 aa).

A Fe2OG dioxygenase domain is found at 259 to 356 (GNASVGAKEA…RYAAALFSNP (98 aa)). Residues H279, D281, and H336 each contribute to the Fe cation site. R347 lines the 2-oxoglutarate pocket.

This sequence belongs to the iron/ascorbate-dependent oxidoreductase family. It depends on Fe(2+) as a cofactor. In terms of tissue distribution, not expressed.

Functionally, 2-oxoglutarate-dependent dioxygenase involved in glucosinolates biosynthesis. Catalyzes the conversion of methylsulfinylalkyl glucosinolates to hydroxyalkyl glucosinolates. The polypeptide is 2-oxoglutarate-dependent dioxygenase AOP3 (AOP3) (Arabidopsis thaliana (Mouse-ear cress)).